The primary structure comprises 238 residues: Probable transcriptional regulatory protein SUB0364 (238 aa).

Belongs to the TACO1 family. YeeN subfamily.

The protein localises to the cytoplasm. This Streptococcus uberis (strain ATCC BAA-854 / 0140J) protein is Probable transcriptional regulatory protein SUB0364.